Here is a 110-residue protein sequence, read N- to C-terminus: Large ribosomal subunit protein uL22 (110 aa).

This sequence belongs to the universal ribosomal protein uL22 family. Part of the 50S ribosomal subunit.

Functionally, this protein binds specifically to 23S rRNA; its binding is stimulated by other ribosomal proteins, e.g. L4, L17, and L20. It is important during the early stages of 50S assembly. It makes multiple contacts with different domains of the 23S rRNA in the assembled 50S subunit and ribosome. Its function is as follows. The globular domain of the protein is located near the polypeptide exit tunnel on the outside of the subunit, while an extended beta-hairpin is found that lines the wall of the exit tunnel in the center of the 70S ribosome. This chain is Large ribosomal subunit protein uL22, found in Syntrophus aciditrophicus (strain SB).